A 139-amino-acid chain; its full sequence is Small ribosomal subunit protein uS12 (139 aa).

The interval 118–139 (AGVANRNQSRSRYGTKKPKPKS) is disordered. Over residues 130–139 (YGTKKPKPKS) the composition is skewed to basic residues.

It belongs to the universal ribosomal protein uS12 family. Part of the 30S ribosomal subunit. Contacts proteins S8 and S17. May interact with IF1 in the 30S initiation complex.

In terms of biological role, with S4 and S5 plays an important role in translational accuracy. Functionally, interacts with and stabilizes bases of the 16S rRNA that are involved in tRNA selection in the A site and with the mRNA backbone. Located at the interface of the 30S and 50S subunits, it traverses the body of the 30S subunit contacting proteins on the other side and probably holding the rRNA structure together. The combined cluster of proteins S8, S12 and S17 appears to hold together the shoulder and platform of the 30S subunit. This is Small ribosomal subunit protein uS12 from Mycoplasma mobile (strain ATCC 43663 / 163K / NCTC 11711) (Mesomycoplasma mobile).